A 483-amino-acid chain; its full sequence is Aspartyl/glutamyl-tRNA(Asn/Gln) amidotransferase subunit B (483 aa).

It belongs to the GatB/GatE family. GatB subfamily. As to quaternary structure, heterotrimer of A, B and C subunits.

It carries out the reaction L-glutamyl-tRNA(Gln) + L-glutamine + ATP + H2O = L-glutaminyl-tRNA(Gln) + L-glutamate + ADP + phosphate + H(+). The enzyme catalyses L-aspartyl-tRNA(Asn) + L-glutamine + ATP + H2O = L-asparaginyl-tRNA(Asn) + L-glutamate + ADP + phosphate + 2 H(+). Its function is as follows. Allows the formation of correctly charged Asn-tRNA(Asn) or Gln-tRNA(Gln) through the transamidation of misacylated Asp-tRNA(Asn) or Glu-tRNA(Gln) in organisms which lack either or both of asparaginyl-tRNA or glutaminyl-tRNA synthetases. The reaction takes place in the presence of glutamine and ATP through an activated phospho-Asp-tRNA(Asn) or phospho-Glu-tRNA(Gln). The sequence is that of Aspartyl/glutamyl-tRNA(Asn/Gln) amidotransferase subunit B from Rickettsia rickettsii (strain Sheila Smith).